The sequence spans 1512 residues: Probable RNA-directed RNA polymerase (1512 aa).

This sequence belongs to the totiviridae RNA-directed RNA polymerase family.

The enzyme catalyses RNA(n) + a ribonucleoside 5'-triphosphate = RNA(n+1) + diphosphate. In terms of biological role, RNA-dependent RNA polymerase which replicates the viral genome. Catalyzes the transcription of fully conservative plus-strand genomic RNAs that are extruded from the virion into the cytoplasm where they function as mRNAs for translation of viral proteins and also as substrates for encapsidation to form new virions. Once encapsidated, the positive strand is converted to dsRNA by the RNA-directed RNA polymerase. In Saccharomyces cerevisiae virus L-BC (ScV-L-BC), this protein is Probable RNA-directed RNA polymerase (gag-pol).